Consider the following 240-residue polypeptide: Uridylate kinase (240 aa).

12–15 is an ATP binding site; sequence KLSG. The interval 20–25 is involved in allosteric activation by GTP; it reads GEQGNG. Position 54 (G54) interacts with UMP. Positions 55 and 59 each coordinate ATP. Residues D74 and 135–142 contribute to the UMP site; that span reads TGNPYFST. ATP is bound by residues N163, Y169, and D172.

Belongs to the UMP kinase family. As to quaternary structure, homohexamer. Interacts with BrxC.

Its subcellular location is the cytoplasm. The catalysed reaction is UMP + ATP = UDP + ADP. It participates in pyrimidine metabolism; CTP biosynthesis via de novo pathway; UDP from UMP (UMPK route): step 1/1. With respect to regulation, allosterically activated by GTP. Can also be activated by dGTP and 3'-anthraniloyl-2'-deoxyguanosine-5'-triphosphate (Ant-dGTP). Inhibited by UTP, 5-bromo-UTP and 5-iodo-UTP. Functionally, catalyzes the reversible phosphorylation of UMP to UDP, with ATP or dATP as the most efficient phosphate donors. Is also able to phosphorylate 5-fluoro-UMP and 6-aza-UMP. The polypeptide is Uridylate kinase (pyrH) (Bacillus subtilis (strain 168)).